Reading from the N-terminus, the 770-residue chain is Metabotropic glutamate receptor-like protein F (770 aa).

The N-terminal stretch at 1–22 (MKIKNFIYFLIYFIFLFKVING) is a signal peptide. The Extracellular segment spans residues 23-370 (QNKTCKISVL…STVDYPESLK (348 aa)). Residues asparagine 24, asparagine 185, asparagine 260, asparagine 286, asparagine 319, and asparagine 344 are each glycosylated (N-linked (GlcNAc...) asparagine). The chain crosses the membrane as a helical span at residues 371 to 391 (IGVTVVSGFCIFLCLISMIIV). The Cytoplasmic segment spans residues 392–405 (IKFKEAKVIKSSSP). Residues 406 to 426 (IFCLLILFGCIVIFVGCIMFA) form a helical membrane-spanning segment. Over 427 to 442 (RSPTDGSCRSRVWLLS) the chain is Extracellular. A helical transmembrane segment spans residues 443-463 (LGYTIFLGNLMVKNWRIWLLF). The Cytoplasmic portion of the chain corresponds to 464-483 (DNPKLKKRAITNWKLYPWVS). The chain crosses the membrane as a helical span at residues 484-504 (GIVIIDIVILSIWQALGDIVA). The Extracellular portion of the chain corresponds to 505-528 (ESRTGIDSLTKYEYRNVCASSDQG). The chain crosses the membrane as a helical span at residues 529-549 (SIALYLLLVFHGLILLVACFI). The Cytoplasmic portion of the chain corresponds to 550-565 (SFKIKVVDIEEFNESK). Residues 566-586 (PITTSVYIITFCLFIVIPIMV) traverse the membrane as a helical segment. Over 587-594 (SSPTVTTQ) the chain is Extracellular. Residues 595 to 615 (TTIICICALITTMLSIILLFG) form a helical membrane-spanning segment. At 616–770 (TKFFKMITVG…GQTEIDSNDV (155 aa)) the chain is on the cytoplasmic side. Residues 639-740 (SSHSQRTKSS…EEKQKDEEEI (102 aa)) are disordered. Composition is skewed to basic and acidic residues over residues 676-693 (SSEK…KDHM) and 730-740 (NEEKQKDEEEI). Residues 715–760 (REQINDNIILENNNDNEEKQKDEEEIKEEKLLVSEIQAKRLSLEQN) are a coiled coil.

In the N-terminal section; belongs to the BMP lipoprotein family. The protein in the C-terminal section; belongs to the G-protein coupled receptor 3 family. GABA-B receptor subfamily.

Its subcellular location is the membrane. The sequence is that of Metabotropic glutamate receptor-like protein F (grlF) from Dictyostelium discoideum (Social amoeba).